The sequence spans 888 residues: Endochitinase A1 (888 aa).

An N-terminal signal peptide occupies residues 1 to 22 (MVSSKLSFVATAVAALAPLASA). Residues 29-338 (SNLAIYWGQG…DHMKDILLHC (310 aa)) form the GH18 domain. The active-site Proton donor is the Glu174. Disordered stretches follow at residues 338 to 631 (CDPS…TTTA), 743 to 799 (PVTE…VSTS), and 813 to 855 (PLIL…YTQE). Residues 344–617 (VTSSSAIPSS…STDESSTTVG (274 aa)) show a composition bias toward low complexity. N-linked (GlcNAc...) asparagine glycosylation is present at Asn622. Residues 764–775 (EGSNPTQPSGAS) show a composition bias toward polar residues. N-linked (GlcNAc...) asparagine glycosylation occurs at Asn780. A compositionally biased stretch (polar residues) spans 835 to 855 (PSGQNSGSSSHVPIPPSYTQE). A lipid anchor (GPI-anchor amidated glycine) is attached at Gly863. Positions 864-888 (AASRVTGLGHGLVLTVLTLSAFFVL) are cleaved as a propeptide — removed in mature form.

Belongs to the glycosyl hydrolase 18 family. Chitinase class III subfamily.

It localises to the cell membrane. The protein localises to the secreted. It is found in the cell wall. It carries out the reaction Random endo-hydrolysis of N-acetyl-beta-D-glucosaminide (1-&gt;4)-beta-linkages in chitin and chitodextrins.. The cyclic peptide natural product argifin acts as a specific inhibitor. In terms of biological role, GPI-anchored chitinase involved in the degradation of chitin, a component of the cell walls of fungi and exoskeletal elements of some animals (including worms and arthropods). Required to reshape the cell wall at the sites where cell wall remodeling and/or cell wall maturation actively take place such as sites of conidia formation. This Aspergillus fumigatus (strain ATCC MYA-4609 / CBS 101355 / FGSC A1100 / Af293) (Neosartorya fumigata) protein is Endochitinase A1 (chiA1).